Here is a 1754-residue protein sequence, read N- to C-terminus: Probable outer membrane protein PmpB (1754 aa).

The N-terminal stretch at 1-14 is a signal peptide; sequence MSSMKWLSATAVFA. 2 stretches are compositionally biased toward low complexity: residues 68–105 and 212–232; these read NIPT…TPDP and SETS…PSSS. Disordered regions lie at residues 68 to 109, 190 to 235, 252 to 271, 397 to 438, 621 to 668, and 1299 to 1332; these read NIPT…KGGG, SSNS…SRAE, PAAQ…GSGG, NADA…ATAK, AAEN…STPS, and TSSA…ATTP. Polar residues-rich tracts occupy residues 252–264 and 402–412; these read PAAQ…STPS and ASSSPQSGSGA. Low complexity-rich tracts occupy residues 413–427, 636–668, 1299–1311, and 1320–1332; these read TTVS…GSDS, PTAD…STPS, TSSA…VSSS, and SAAA…ATTP. Residues 1461–1754 enclose the Autotransporter domain; the sequence is DDIAYNNFWV…MTSCGARMIF (294 aa).

It belongs to the PMP outer membrane protein family.

It localises to the secreted. The protein resides in the cell wall. Its subcellular location is the cell outer membrane. This Chlamydia trachomatis serovar D (strain ATCC VR-885 / DSM 19411 / UW-3/Cx) protein is Probable outer membrane protein PmpB (pmpB).